Reading from the N-terminus, the 218-residue chain is MKFFIDTADVNEIREANKLHFLDGVTTNPTLIAKVKKPFWDVVKSILAEVPDKPVSLEVASTDAEGMIKEGEKLAELGKNVVIKIPMTPEGLKAVSYFENKGIKTNVTLVFSPAQALLAMKVGASYISPFVGRLDDISHTGMDLIRQIKQIKDNYNFKSEIIVASVRNPVHVIESAMIGADIATIPYSVIAQLAKHPLTDIGLERFLKDWESVPEKPF.

Catalysis depends on Lys84, which acts as the Schiff-base intermediate with substrate.

Belongs to the transaldolase family. Type 3B subfamily.

It is found in the cytoplasm. It carries out the reaction D-sedoheptulose 7-phosphate + D-glyceraldehyde 3-phosphate = D-erythrose 4-phosphate + beta-D-fructose 6-phosphate. The protein operates within carbohydrate degradation; pentose phosphate pathway; D-glyceraldehyde 3-phosphate and beta-D-fructose 6-phosphate from D-ribose 5-phosphate and D-xylulose 5-phosphate (non-oxidative stage): step 2/3. In terms of biological role, transaldolase is important for the balance of metabolites in the pentose-phosphate pathway. The chain is Probable transaldolase from Sulfurihydrogenibium sp. (strain YO3AOP1).